Reading from the N-terminus, the 536-residue chain is UDP-glucuronosyltransferase 2A2 (536 aa).

At 1-15 the chain is on the cytoplasmic side; it reads MVSIRDFTMPKKFVQ. Residues 16-36 traverse the membrane as a helical segment; the sequence is MLVFNLTLTEVVLSGNVLIWP. The Lumenal segment spans residues 37–500; that stretch reads TDGSHWLNIK…TWFQYHSLDV (464 aa). Residues Asn58, Asn322, and Asn356 are each glycosylated (N-linked (GlcNAc...) asparagine). The chain crosses the membrane as a helical span at residues 501–521; the sequence is IGFLLVCVTTAIFLVIQCCLF. The Cytoplasmic segment spans residues 522–536; the sequence is SCQKFGKIGKKKKRE.

The protein belongs to the UDP-glycosyltransferase family. In terms of tissue distribution, mainly expressed in the nasal mucosa.

Its subcellular location is the endoplasmic reticulum membrane. It carries out the reaction glucuronate acceptor + UDP-alpha-D-glucuronate = acceptor beta-D-glucuronoside + UDP + H(+). The enzyme catalyses 17alpha-estradiol + UDP-alpha-D-glucuronate = 17alpha-estradiol 3-O-(beta-D-glucuronate) + UDP + H(+). It catalyses the reaction 17beta-estradiol + UDP-alpha-D-glucuronate = 17beta-estradiol 3-O-(beta-D-glucuronate) + UDP + H(+). The catalysed reaction is chenodeoxycholate + UDP-alpha-D-glucuronate = chenodeoxycholoyl-24-O-(beta-D-glucuronate) + UDP. It carries out the reaction lithocholate + UDP-alpha-D-glucuronate = lithocholoyl-24-O-(beta-D-glucuronate) + UDP. The enzyme catalyses deoxycholate + UDP-alpha-D-glucuronate = deoxycholoyl-24-O-(beta-D-glucuronate) + UDP. It catalyses the reaction hyocholate + UDP-alpha-D-glucuronate = hyocholoyl-24-O-(beta-D-glucuronate) + UDP. The catalysed reaction is hyodeoxycholate + UDP-alpha-D-glucuronate = hyodeoxycholate 6-O-(beta-D-glucuronate) + UDP + H(+). Its function is as follows. UDP-glucuronosyltransferase (UGT) that catalyzes phase II biotransformation reactions in which lipophilic substrates are conjugated with glucuronic acid to increase the metabolite's water solubility, thereby facilitating excretion into either the urine or bile. Essential for the elimination and detoxification of drugs, xenobiotics and endogenous compounds. Catalyzes the glucuronidation of endogenous estrogen hormone estradiol. Contributes to bile acid (BA) detoxification by catalyzing the glucuronidation of BA substrates, which are natural detergents for dietary lipids absorption. Shows a potential role in detoxification of toxic waste compounds in the amniotic fluid before birth, and air-born chemical after birth. In Homo sapiens (Human), this protein is UDP-glucuronosyltransferase 2A2.